The following is a 318-amino-acid chain: Ubiquitin-like domain-containing CTD phosphatase 1 (318 aa).

An N-acetylalanine modification is found at Ala-2. The Ubiquitin-like domain maps to 3–81; that stretch reads LPIIVKWGGQ…IMMMGTREES (79 aa). Lys-117 is modified (N6-acetyllysine). Positions 133–294 constitute an FCP1 homology domain; it reads PREGKKLLVL…LKLTQYLKEI (162 aa). Positions 143, 145, and 253 each coordinate Mg(2+).

It depends on Mg(2+) as a cofactor.

It is found in the nucleus. It carries out the reaction O-phospho-L-seryl-[protein] + H2O = L-seryl-[protein] + phosphate. The enzyme catalyses O-phospho-L-threonyl-[protein] + H2O = L-threonyl-[protein] + phosphate. In terms of biological role, dephosphorylates 26S nuclear proteasomes, thereby decreasing their proteolytic activity. Recruited to the 19S regulatory particle of the 26S proteasome through its interaction with 19S component PSMD2/RPN1. Once recruited, dephosphorylates 19S component PSMC2/RPT1 which impairs PSMC2 ATPase activity and disrupts 26S proteasome assembly. Has also been reported to stimulate the proteolytic activity of the 26S proteasome. This chain is Ubiquitin-like domain-containing CTD phosphatase 1 (UBLCP1), found in Bos taurus (Bovine).